The following is a 361-amino-acid chain: Protein Csal_2339 (361 aa).

S91 functions as the Proton acceptor in the catalytic mechanism. Residues 92–93 (GS) and 259–260 (GT) each bind substrate.

This sequence belongs to the proline racemase family.

The catalysed reaction is trans-4-hydroxy-L-proline = cis-4-hydroxy-D-proline. In terms of biological role, in vitro, catalyzes the epimerization of trans-4-hydroxy-L-proline (t4LHyp) to cis-4-hydroxy-D-proline (c4DHyp), albeit with very low efficiency. The physiological substrate may be different. Displays neither proline racemase activity nor t3LHyp dehydratase activity. The protein is Protein Csal_2339 of Chromohalobacter salexigens (strain ATCC BAA-138 / DSM 3043 / CIP 106854 / NCIMB 13768 / 1H11).